The sequence spans 80 residues: Inner kinetochore subunit MHF2 (80 aa).

Belongs to the CENP-X/MHF2 family. In terms of assembly, the MHF histone-fold complex is a heterotetramer of 2 MHF1-MHF2 heterodimers. Together with MPH1/FANCM, forms the FANCM-MHF complex. Component of the inner kinetochore constitutive centromere-associated network (CCAN) (also known as central kinetochore CTF19 complex in yeast), which is composed of at least AME1, CHL4, CNN1, CTF3, CTF19, IML3, MCM16, MCM21, MCM22, MHF1, MHF2, MIF2, NKP1, NKP2, OKP1 and WIP1.

Its function is as follows. DNA-binding component of a FANCM-MHF complex involved in DNA damage repair and genome maintenance. FANCM-MHF promotes gene conversion at blocked replication forks, probably by reversal of the stalled fork. Component of the kinetochore, a multiprotein complex that assembles on centromeric DNA and attaches chromosomes to spindle microtubules, mediating chromosome segregation and sister chromatid segregation during meiosis and mitosis. Component of the inner kinetochore constitutive centromere-associated network (CCAN), which serves as a structural platform for outer kinetochore assembly. The chain is Inner kinetochore subunit MHF2 from Saccharomyces cerevisiae (strain ATCC 204508 / S288c) (Baker's yeast).